Reading from the N-terminus, the 690-residue chain is Methionine--tRNA ligase (690 aa).

The 'HIGH' region motif lies at Pro20–His30. The Zn(2+) site is built by Cys151, Cys154, Cys164, and Cys167. Residues Lys337–Ser341 carry the 'KMSKS' region motif. Residue Lys340 coordinates ATP. Residues Asp589–Met690 enclose the tRNA-binding domain.

Belongs to the class-I aminoacyl-tRNA synthetase family. MetG type 1 subfamily. In terms of assembly, homodimer. The cofactor is Zn(2+).

The protein resides in the cytoplasm. The enzyme catalyses tRNA(Met) + L-methionine + ATP = L-methionyl-tRNA(Met) + AMP + diphosphate. Is required not only for elongation of protein synthesis but also for the initiation of all mRNA translation through initiator tRNA(fMet) aminoacylation. The polypeptide is Methionine--tRNA ligase (Vibrio vulnificus (strain CMCP6)).